We begin with the raw amino-acid sequence, 380 residues long: NADPH quinone oxidoreductase (380 aa).

The transit peptide at 1–17 (MSSFLSKRFISTTQRAM) directs the protein to the mitochondrion.

Belongs to the zinc-containing alcohol dehydrogenase family. Quinone oxidoreductase subfamily. As to quaternary structure, homodimer.

Its subcellular location is the mitochondrion. It catalyses the reaction a quinone + NADH + H(+) = a quinol + NAD(+). The enzyme catalyses a quinone + NADPH + H(+) = a quinol + NADP(+). Functionally, NADPH quinone oxidoreductase that efficiently reduces 1,4-benzoquinone, whereas no activities are found for menadiones and methoxyquinones. The protein is NADPH quinone oxidoreductase of Kluyveromyces marxianus (Yeast).